The following is a 490-amino-acid chain: ATP-dependent 6-phosphofructokinase (490 aa).

Residues G109, 175–176 (RG), and 200–203 (GDGT) each bind ATP. Residue D201 coordinates Mg(2+). Substrate contacts are provided by residues 229–231 (TID), 274–276 (MGR), E327, and 383–386 (YMIR). D231 functions as the Proton acceptor in the catalytic mechanism. Residues 488–490 (SKL) carry the Peroxisomal targeting signal motif.

This sequence belongs to the phosphofructokinase type A (PFKA) family. PPi-dependent PFK group II subfamily. Atypical ATP-dependent clade 'X' sub-subfamily. Homotetramer. Requires Mg(2+) as cofactor.

The protein resides in the glycosome. The enzyme catalyses beta-D-fructose 6-phosphate + ATP = beta-D-fructose 1,6-bisphosphate + ADP + H(+). The protein operates within carbohydrate degradation; glycolysis; D-glyceraldehyde 3-phosphate and glycerone phosphate from D-glucose: step 3/4. With respect to regulation, allosterically activated by AMP. In terms of biological role, catalyzes the phosphorylation of D-fructose 6-phosphate to fructose 1,6-bisphosphate by ATP, the first committing step of glycolysis. The sequence is that of ATP-dependent 6-phosphofructokinase from Trypanoplasma borreli.